The sequence spans 128 residues: Holo-[acyl-carrier-protein] synthase (128 aa).

Mg(2+)-binding residues include aspartate 10 and glutamate 59.

This sequence belongs to the P-Pant transferase superfamily. AcpS family. Requires Mg(2+) as cofactor.

The protein localises to the cytoplasm. The enzyme catalyses apo-[ACP] + CoA = holo-[ACP] + adenosine 3',5'-bisphosphate + H(+). In terms of biological role, transfers the 4'-phosphopantetheine moiety from coenzyme A to a Ser of acyl-carrier-protein. The protein is Holo-[acyl-carrier-protein] synthase of Syntrophotalea carbinolica (strain DSM 2380 / NBRC 103641 / GraBd1) (Pelobacter carbinolicus).